Here is a 557-residue protein sequence, read N- to C-terminus: Urocanate hydratase (557 aa).

Positions 1–20 are disordered; that stretch reads MSNPRHNEREVRSPRGDELN. NAD(+)-binding positions include 52–53, Q130, 176–178, E196, R201, 242–243, 263–267, 273–274, and Y322; these read GG, GMG, NA, QTSAH, and YL. The active site involves C410. Position 492 (G492) interacts with NAD(+).

It belongs to the urocanase family. Requires NAD(+) as cofactor.

It localises to the cytoplasm. The catalysed reaction is 4-imidazolone-5-propanoate = trans-urocanate + H2O. The protein operates within amino-acid degradation; L-histidine degradation into L-glutamate; N-formimidoyl-L-glutamate from L-histidine: step 2/3. Functionally, catalyzes the conversion of urocanate to 4-imidazolone-5-propionate. The protein is Urocanate hydratase of Brucella anthropi (strain ATCC 49188 / DSM 6882 / CCUG 24695 / JCM 21032 / LMG 3331 / NBRC 15819 / NCTC 12168 / Alc 37) (Ochrobactrum anthropi).